We begin with the raw amino-acid sequence, 370 residues long: S-adenosylmethionine:tRNA ribosyltransferase-isomerase (370 aa).

Belongs to the QueA family. Monomer.

It is found in the cytoplasm. It carries out the reaction 7-aminomethyl-7-carbaguanosine(34) in tRNA + S-adenosyl-L-methionine = epoxyqueuosine(34) in tRNA + adenine + L-methionine + 2 H(+). The protein operates within tRNA modification; tRNA-queuosine biosynthesis. In terms of biological role, transfers and isomerizes the ribose moiety from AdoMet to the 7-aminomethyl group of 7-deazaguanine (preQ1-tRNA) to give epoxyqueuosine (oQ-tRNA). The protein is S-adenosylmethionine:tRNA ribosyltransferase-isomerase of Prochlorococcus marinus (strain SARG / CCMP1375 / SS120).